A 212-amino-acid polypeptide reads, in one-letter code: Pyridoxine/pyridoxamine 5'-phosphate oxidase (212 aa).

Substrate-binding positions include 7-10 (REEY) and Lys65. FMN contacts are provided by residues 60–65 (RTVLLK), 75–76 (FT), Lys82, and Gln104. Substrate is bound by residues Tyr122, Arg126, and Ser130. FMN-binding positions include 139–140 (QS) and Trp184. 190–192 (RLH) lines the substrate pocket. Arg194 lines the FMN pocket.

This sequence belongs to the pyridoxamine 5'-phosphate oxidase family. As to quaternary structure, homodimer. FMN is required as a cofactor.

The catalysed reaction is pyridoxamine 5'-phosphate + O2 + H2O = pyridoxal 5'-phosphate + H2O2 + NH4(+). It carries out the reaction pyridoxine 5'-phosphate + O2 = pyridoxal 5'-phosphate + H2O2. The protein operates within cofactor metabolism; pyridoxal 5'-phosphate salvage; pyridoxal 5'-phosphate from pyridoxamine 5'-phosphate: step 1/1. Its pathway is cofactor metabolism; pyridoxal 5'-phosphate salvage; pyridoxal 5'-phosphate from pyridoxine 5'-phosphate: step 1/1. Its function is as follows. Catalyzes the oxidation of either pyridoxine 5'-phosphate (PNP) or pyridoxamine 5'-phosphate (PMP) into pyridoxal 5'-phosphate (PLP). The chain is Pyridoxine/pyridoxamine 5'-phosphate oxidase from Rippkaea orientalis (strain PCC 8801 / RF-1) (Cyanothece sp. (strain PCC 8801)).